We begin with the raw amino-acid sequence, 185 residues long: Protein GrpE (185 aa).

The disordered stretch occupies residues 1–40; the sequence is MSEEKKDEILEQETVETKEEIKTEEAEQKTESLEEKVARL.

Belongs to the GrpE family. As to quaternary structure, homodimer.

It localises to the cytoplasm. Functionally, participates actively in the response to hyperosmotic and heat shock by preventing the aggregation of stress-denatured proteins, in association with DnaK and GrpE. It is the nucleotide exchange factor for DnaK and may function as a thermosensor. Unfolded proteins bind initially to DnaJ; upon interaction with the DnaJ-bound protein, DnaK hydrolyzes its bound ATP, resulting in the formation of a stable complex. GrpE releases ADP from DnaK; ATP binding to DnaK triggers the release of the substrate protein, thus completing the reaction cycle. Several rounds of ATP-dependent interactions between DnaJ, DnaK and GrpE are required for fully efficient folding. The protein is Protein GrpE of Aliarcobacter butzleri (strain RM4018) (Arcobacter butzleri).